A 424-amino-acid polypeptide reads, in one-letter code: Serine hydroxymethyltransferase (424 aa).

Residues L119 and 123-125 contribute to the (6S)-5,6,7,8-tetrahydrofolate site; that span reads GHL. K228 is subject to N6-(pyridoxal phosphate)lysine. 353 to 355 serves as a coordination point for (6S)-5,6,7,8-tetrahydrofolate; it reads SAF.

The protein belongs to the SHMT family. In terms of assembly, homodimer. It depends on pyridoxal 5'-phosphate as a cofactor.

It localises to the cytoplasm. It catalyses the reaction (6R)-5,10-methylene-5,6,7,8-tetrahydrofolate + glycine + H2O = (6S)-5,6,7,8-tetrahydrofolate + L-serine. The protein operates within one-carbon metabolism; tetrahydrofolate interconversion. Its pathway is amino-acid biosynthesis; glycine biosynthesis; glycine from L-serine: step 1/1. Its function is as follows. Catalyzes the reversible interconversion of serine and glycine with tetrahydrofolate (THF) serving as the one-carbon carrier. Also exhibits THF-independent aldolase activity toward beta-hydroxyamino acids, producing glycine and aldehydes, via a retro-aldol mechanism. The chain is Serine hydroxymethyltransferase from Natronomonas pharaonis (strain ATCC 35678 / DSM 2160 / CIP 103997 / JCM 8858 / NBRC 14720 / NCIMB 2260 / Gabara) (Halobacterium pharaonis).